The primary structure comprises 236 residues: 5'-methylthioadenosine/S-adenosylhomocysteine nucleosidase (236 aa).

Residue E12 is the Proton acceptor of the active site. Substrate contacts are provided by residues G78, I153, and 174 to 175 (ME). The Proton donor role is filled by D198.

Belongs to the PNP/UDP phosphorylase family. MtnN subfamily.

The catalysed reaction is S-adenosyl-L-homocysteine + H2O = S-(5-deoxy-D-ribos-5-yl)-L-homocysteine + adenine. The enzyme catalyses S-methyl-5'-thioadenosine + H2O = 5-(methylsulfanyl)-D-ribose + adenine. It carries out the reaction 5'-deoxyadenosine + H2O = 5-deoxy-D-ribose + adenine. It functions in the pathway amino-acid biosynthesis; L-methionine biosynthesis via salvage pathway; S-methyl-5-thio-alpha-D-ribose 1-phosphate from S-methyl-5'-thioadenosine (hydrolase route): step 1/2. Catalyzes the irreversible cleavage of the glycosidic bond in both 5'-methylthioadenosine (MTA) and S-adenosylhomocysteine (SAH/AdoHcy) to adenine and the corresponding thioribose, 5'-methylthioribose and S-ribosylhomocysteine, respectively. Also cleaves 5'-deoxyadenosine, a toxic by-product of radical S-adenosylmethionine (SAM) enzymes, into 5-deoxyribose and adenine. This is 5'-methylthioadenosine/S-adenosylhomocysteine nucleosidase from Shewanella baltica (strain OS185).